The chain runs to 91 residues: Small ribosomal subunit protein bS16 (91 aa).

This sequence belongs to the bacterial ribosomal protein bS16 family.

The sequence is that of Small ribosomal subunit protein bS16 from Latilactobacillus sakei subsp. sakei (strain 23K) (Lactobacillus sakei subsp. sakei).